A 438-amino-acid polypeptide reads, in one-letter code: High-affinity gluconate transporter (438 aa).

13 helical membrane-spanning segments follow: residues 2 to 22, 23 to 43, 52 to 72, 108 to 128, 134 to 154, 174 to 194, 222 to 242, 258 to 278, 292 to 312, 327 to 347, 349 to 369, 370 to 390, and 418 to 438; these read PLVI…RFKM, NGFI…GMPL, AGVG…AMLG, VGFA…VFTI, IPLL…HGFL, TLLY…PVYA, FGVS…RAIA, FLGD…FTFG, LVSS…GGAF, SMMH…AAVL, IALG…APLI, ATTG…SVIF, and MLET…NMVI.

Belongs to the GntP permease family.

It localises to the cell inner membrane. Its pathway is carbohydrate acid metabolism; D-gluconate degradation. Part of the gluconate utilization system Gnt-I; high-affinity intake of gluconate. In Escherichia coli (strain K12), this protein is High-affinity gluconate transporter (gntT).